We begin with the raw amino-acid sequence, 163 residues long: MGNLTHFDENGASRMVDVTEKPATERVAVAAGEITMRPQTLDRILRKGFEKGDVLEVARLAGIMAAKKVDGLIPLCHQINLTSVKLAFQPDEAHSRVVITAQVKCTAPTGVEMEALTAVSVAALTIYDMCKAMDREMVIGAVRLLEKSGGRSGHFVRDAQDRE.

Substrate-binding positions include Leu75–His77 and Met113–Glu114. Residue Asp128 is part of the active site.

The protein belongs to the MoaC family. Homohexamer; trimer of dimers.

It carries out the reaction (8S)-3',8-cyclo-7,8-dihydroguanosine 5'-triphosphate = cyclic pyranopterin phosphate + diphosphate. It functions in the pathway cofactor biosynthesis; molybdopterin biosynthesis. In terms of biological role, catalyzes the conversion of (8S)-3',8-cyclo-7,8-dihydroguanosine 5'-triphosphate to cyclic pyranopterin monophosphate (cPMP). The protein is Cyclic pyranopterin monophosphate synthase of Magnetococcus marinus (strain ATCC BAA-1437 / JCM 17883 / MC-1).